The sequence spans 222 residues: Thiamine-phosphate synthase (222 aa).

4-amino-2-methyl-5-(diphosphooxymethyl)pyrimidine-binding positions include 44 to 48 (QFREK) and asparagine 79. Residues aspartate 80 and aspartate 99 each coordinate Mg(2+). Residue serine 117 coordinates 4-amino-2-methyl-5-(diphosphooxymethyl)pyrimidine. 143–145 (TET) contributes to the 2-[(2R,5Z)-2-carboxy-4-methylthiazol-5(2H)-ylidene]ethyl phosphate binding site. Lysine 146 lines the 4-amino-2-methyl-5-(diphosphooxymethyl)pyrimidine pocket. Residues glycine 175 and 195 to 196 (IS) contribute to the 2-[(2R,5Z)-2-carboxy-4-methylthiazol-5(2H)-ylidene]ethyl phosphate site.

This sequence belongs to the thiamine-phosphate synthase family. As to quaternary structure, monomer. Mg(2+) is required as a cofactor.

It catalyses the reaction 2-[(2R,5Z)-2-carboxy-4-methylthiazol-5(2H)-ylidene]ethyl phosphate + 4-amino-2-methyl-5-(diphosphooxymethyl)pyrimidine + 2 H(+) = thiamine phosphate + CO2 + diphosphate. The catalysed reaction is 2-(2-carboxy-4-methylthiazol-5-yl)ethyl phosphate + 4-amino-2-methyl-5-(diphosphooxymethyl)pyrimidine + 2 H(+) = thiamine phosphate + CO2 + diphosphate. It carries out the reaction 4-methyl-5-(2-phosphooxyethyl)-thiazole + 4-amino-2-methyl-5-(diphosphooxymethyl)pyrimidine + H(+) = thiamine phosphate + diphosphate. It participates in cofactor biosynthesis; thiamine diphosphate biosynthesis; thiamine phosphate from 4-amino-2-methyl-5-diphosphomethylpyrimidine and 4-methyl-5-(2-phosphoethyl)-thiazole: step 1/1. In terms of biological role, condenses 4-methyl-5-(beta-hydroxyethyl)thiazole monophosphate (THZ-P) and 2-methyl-4-amino-5-hydroxymethyl pyrimidine pyrophosphate (HMP-PP) to form thiamine monophosphate (TMP). Is also able to use the 2-methoxy analog MeO-HMP-PP, as substrate in vitro, but not the 2-trifluoromethyl analog CF(3)-HMP-PP. This is Thiamine-phosphate synthase (thiE) from Bacillus subtilis (strain 168).